The chain runs to 183 residues: MTKQPEDWLDDVPGDDIEDEDDEIIWVSKSEIKRDAEELKRLGAEIVDLGKNALDKIPLDADLRAAIELAQRIKMEGRRRQLQLIGKMLRQRDVEPIRQALDKLKNRHNQQVVLFHKLENLRDRLIDQGDDAIAEVLNLWPDADRQQLRTRIRNAKKEKEGNKPPKSARQIFQYLRELAENEG.

It belongs to the DarP family.

Its subcellular location is the cytoplasm. In terms of biological role, member of a network of 50S ribosomal subunit biogenesis factors which assembles along the 30S-50S interface, preventing incorrect 23S rRNA structures from forming. Promotes peptidyl transferase center (PTC) maturation. In Escherichia coli O7:K1 (strain IAI39 / ExPEC), this protein is Dual-action ribosomal maturation protein DarP.